A 205-amino-acid polypeptide reads, in one-letter code: Inactive ribonuclease-like protein 9 (205 aa).

The N-terminal stretch at 1 to 26 (MMRTLITIHPLPLLLLLQQLLQPVQF) is a signal peptide. Intrachain disulfides connect C98–C153, C116–C168, and C123–C130. N131 and N143 each carry an N-linked (GlcNAc...) asparagine glycan.

Belongs to the pancreatic ribonuclease family.

The protein localises to the secreted. Its function is as follows. Does not exhibit any ribonuclease activity. The polypeptide is Inactive ribonuclease-like protein 9 (RNASE9) (Gorilla gorilla gorilla (Western lowland gorilla)).